The primary structure comprises 211 residues: MSVEEVTQKAQALSVGDNEERKTVLTDSKDFDLKHPLNSKWTLWYTKPPVGDNESWSDLLRPVTSFTTVEEFWAIQNAIPKPRELPLKSDYHLFRNDIRPEWEDEANSRGGKWSFQFKVRNPPIDDLWLRALLAVIGESIDEDESEINGVVINVRRSGFKIGLWTKSVRQAPLSKVGAKFKAVLQLDDSDTLEFFAHSSANDKNAKPALVL.

Belongs to the eukaryotic initiation factor 4E family. As to quaternary structure, eIF4F is a multi-subunit complex, the composition of which varies with external and internal environmental conditions. It is composed of at least eIF4A, eIF4E and eIF4G. eIF4E is also known to interact with other partners.

Its function is as follows. Recognizes and binds the 7-methylguanosine-containing mRNA cap during an early step in the initiation of protein synthesis and facilitates ribosome binding by inducing the unwinding of the mRNAs secondary structures. This chain is Eukaryotic translation initiation factor 4E (TIF45), found in Eremothecium gossypii (strain ATCC 10895 / CBS 109.51 / FGSC 9923 / NRRL Y-1056) (Yeast).